A 124-amino-acid polypeptide reads, in one-letter code: Flowering-promoting factor 1-like protein 1 (124 aa).

The segment at 19–42 (PYNQSAGDSSESSSSGGNQQQRMR) is disordered. Residues 22-39 (QSAGDSSESSSSGGNQQQ) show a composition bias toward low complexity.

Belongs to the FPF1 family. Expressed in roots, flowers, and at a low level, in leaves.

Its function is as follows. Modulates the competence to flowering of apical meristems. The sequence is that of Flowering-promoting factor 1-like protein 1 (FLP1) from Arabidopsis thaliana (Mouse-ear cress).